Here is a 419-residue protein sequence, read N- to C-terminus: Capsule polysaccharide modification protein LipB (419 aa).

The protein localises to the cell inner membrane. Its function is as follows. Involved in the phospholipid modification of the capsular polysaccharide, a strong requirement for its translocation to the cell surface. This is Capsule polysaccharide modification protein LipB (lipB) from Neisseria meningitidis serogroup B (strain ATCC BAA-335 / MC58).